We begin with the raw amino-acid sequence, 295 residues long: Ribosomal protein L11 methyltransferase (295 aa).

S-adenosyl-L-methionine-binding residues include Thr-146, Gly-167, Asp-189, and Asn-231.

The protein belongs to the methyltransferase superfamily. PrmA family.

The protein resides in the cytoplasm. It carries out the reaction L-lysyl-[protein] + 3 S-adenosyl-L-methionine = N(6),N(6),N(6)-trimethyl-L-lysyl-[protein] + 3 S-adenosyl-L-homocysteine + 3 H(+). Methylates ribosomal protein L11. In Vibrio vulnificus (strain CMCP6), this protein is Ribosomal protein L11 methyltransferase.